The sequence spans 146 residues: Hemoglobin subunit beta (146 aa).

Position 1 is an N-acetylvaline (Val1). Positions 2–146 (HLTAEEKAAV…VATALAHKYH (145 aa)) constitute a Globin domain. Thr12 carries the post-translational modification Phosphothreonine. At Ser44 the chain carries Phosphoserine. N6-acetyllysine is present on Lys59. His63 serves as a coordination point for heme b. Residue Lys82 is modified to N6-acetyllysine. His92 lines the heme b pocket. An S-nitrosocysteine modification is found at Cys93. Residue Lys144 is modified to N6-acetyllysine.

Belongs to the globin family. In terms of assembly, heterotetramer of two alpha chains and two beta chains. As to expression, red blood cells.

Its function is as follows. Involved in oxygen transport from the lung to the various peripheral tissues. The chain is Hemoglobin subunit beta (HBB) from Mustela lutreola (European mink).